Reading from the N-terminus, the 92-residue chain is WAP four-disulfide core domain protein 12 (92 aa).

The signal sequence occupies residues 1 to 23 (MGSSRFLVLMVSLALVTLVAAEG). A WAP domain is found at 27 to 74 (NIEKPEVCPADNVRCIKSDPPQCHTDQDCQGIRKCCYLHCGFKCVIPV). Intrachain disulfides connect Cys-34–Cys-62, Cys-41–Cys-66, Cys-49–Cys-61, and Cys-55–Cys-70.

The protein localises to the secreted. Antibacterial protein. Putative acid-stable proteinase inhibitor. The chain is WAP four-disulfide core domain protein 12 (WFDC12) from Aotus nancymaae (Ma's night monkey).